The sequence spans 276 residues: Putative olfactory receptor 10J6 (276 aa).

The Extracellular segment spans residues 1 to 25 (MRRKNLTEVTEFVFLGFSRFHKHHI). Asparagine 5 carries N-linked (GlcNAc...) asparagine glycosylation. A helical transmembrane segment spans residues 26–46 (TLFVVFLILYTLTVAGNAIIM). The Cytoplasmic segment spans residues 47-54 (TIICIDRH). A helical transmembrane segment spans residues 55–75 (LHTPMYFFLSMLASSKTVYTL). Residues 76-99 (FIIPQMLSSFVTQTQPISLAGCTT) lie on the Extracellular side of the membrane. Cysteines 97 and 188 form a disulfide. A helical transmembrane segment spans residues 100–120 (QTFFFVTLAINNCFLLTVMGY). Residues 121–139 (DHYMAICNPLRYRVITSKK) lie on the Cytoplasmic side of the membrane. A helical membrane pass occupies residues 140–160 (VCVQLVCGAFSIGLAMAAVQV). The Extracellular segment spans residues 161 to 196 (TSIFTLPFCHTVVGHFFCDILPVMKLSCINTTINEI). Asparagine 190 carries an N-linked (GlcNAc...) asparagine glycan. A helical transmembrane segment spans residues 197–216 (INFVVRLFVILVPMGLVFIS). Topologically, residues 217-236 (YVLIISTVLKIASAEGWKKT) are cytoplasmic. The helical transmembrane segment at 237-257 (FATCAFHLTVVIVHYGCASIA) threads the bilayer. Over 258 to 270 (YLMPKSENSIEQD) the chain is Extracellular. Residues 271–276 (LLLSVT) traverse the membrane as a helical segment.

Belongs to the G-protein coupled receptor 1 family.

It localises to the cell membrane. Its function is as follows. Odorant receptor. The chain is Putative olfactory receptor 10J6 (OR10J6P) from Homo sapiens (Human).